The primary structure comprises 99 residues: Orphan antixoxin protein TacA (99 aa).

It belongs to the TacA antitoxin family.

Its function is as follows. Putative antitoxin component of a toxin-antitoxin (TA) system; its cognate toxin (usually a tRNA acetylase) is unknown. This Haemophilus influenzae (strain ATCC 51907 / DSM 11121 / KW20 / Rd) protein is Orphan antixoxin protein TacA.